The following is a 322-amino-acid chain: MFEIHPVKKVSVVIPVYNEQESLPELIRRTTTACESLGKEYEILLIDDGSSDNSAHMLVEASQAENSHIVSILLNRNYGQHSAIMAGFSHVTGDLIITLDADLQNPPEEIPRLVAKADEGYDVVGTVRQNRQDSWFRKTASKMINRLIQRTTGKAMGDYGCMLRAYRRHIVDAMLHCHERSTFIPILANIFARRAIEIPVHHAEREYGESKYSFMRLINLMYDLVTCLTTTPLRMLSLLGSIIAIGGFSIAVLLVILRLTFGPQWAAEGVFMLFAVLFTFIGAQFIGMGLLGEYIGRIYTDVRARPRYFVQQVIRPSSKENE.

Residues 1–235 are Cytoplasmic-facing; it reads MFEIHPVKKV…TCLTTTPLRM (235 aa). The helical transmembrane segment at 236–256 threads the bilayer; sequence LSLLGSIIAIGGFSIAVLLVI. Over 257 to 269 the chain is Periplasmic; sequence LRLTFGPQWAAEG. The chain crosses the membrane as a helical span at residues 270–290; that stretch reads VFMLFAVLFTFIGAQFIGMGL. At 291 to 322 the chain is on the cytoplasmic side; sequence LGEYIGRIYTDVRARPRYFVQQVIRPSSKENE.

Belongs to the glycosyltransferase 2 family.

It localises to the cell inner membrane. The catalysed reaction is UDP-4-deoxy-4-formamido-beta-L-arabinose + di-trans,octa-cis-undecaprenyl phosphate = 4-deoxy-4-formamido-alpha-L-arabinopyranosyl di-trans,octa-cis-undecaprenyl phosphate + UDP. Its pathway is glycolipid biosynthesis; 4-amino-4-deoxy-alpha-L-arabinose undecaprenyl phosphate biosynthesis; 4-amino-4-deoxy-alpha-L-arabinose undecaprenyl phosphate from UDP-4-deoxy-4-formamido-beta-L-arabinose and undecaprenyl phosphate: step 1/2. It participates in bacterial outer membrane biogenesis; lipopolysaccharide biosynthesis. Functionally, catalyzes the transfer of 4-deoxy-4-formamido-L-arabinose from UDP to undecaprenyl phosphate. The modified arabinose is attached to lipid A and is required for resistance to polymyxin and cationic antimicrobial peptides. The protein is Undecaprenyl-phosphate 4-deoxy-4-formamido-L-arabinose transferase of Shigella dysenteriae serotype 1 (strain Sd197).